The following is a 248-amino-acid chain: Probable transcriptional regulatory protein Avi_3631 (248 aa).

It belongs to the TACO1 family.

It is found in the cytoplasm. This is Probable transcriptional regulatory protein Avi_3631 from Allorhizobium ampelinum (strain ATCC BAA-846 / DSM 112012 / S4) (Agrobacterium vitis (strain S4)).